We begin with the raw amino-acid sequence, 550 residues long: Sterol O-acyltransferase 1 (550 aa).

M1 bears the N-acetylmethionine mark. The disordered stretch occupies residues 1-36 (MVGEEKMSLRNRLSKSRENPEEDEDQRKPAKESLEA). Over 1–138 (MVGEEKMSLR…LDELLEVDHI (138 aa)) the chain is Cytoplasmic. Phosphoserine is present on S8. The segment covering 15 to 34 (KSRENPEEDEDQRKPAKESL) has biased composition (basic and acidic residues). H137 contributes to the cholesterol binding site. A helical membrane pass occupies residues 139 to 160 (RTIYHMFIALLILFILSTLVVD). Residues 161–180 (YIDEGRLVLEFSLLSYAFGK) are Lumenal-facing. A helical transmembrane segment spans residues 181–206 (FPTVVWTWWIMFLSTFSVPYFLFQRW). The Cytoplasmic portion of the chain corresponds to 207-218 (ATGYSKSSHPLI). Residues 219-244 (NSLFHGFLFMVFQIGILGFGPTYVVL) traverse the membrane as a helical segment. The Lumenal portion of the chain corresponds to 245 to 252 (AYTLPPAS). Residues 253-276 (RFIIIFEQIRFVMKAHSFVRENVP) form a helical membrane-spanning segment. Residues 277–319 (RVLNSAKEKSSTVPIPTVNQYLYFLFAPTLIYRDSYPRNPTVR) are Cytoplasmic-facing. The chain crosses the membrane as a helical span at residues 320 to 352 (WGYVAMQFAQVFGCFFYVYYIFERLCAPLFRNI). The Lumenal segment spans residues 353 to 369 (KQEPFSARVLVLCVFNS). Residues 370-395 (ILPGVLILFLTFFAFLHCWLNAFAEM) traverse the membrane as a helical segment. The Cytoplasmic segment spans residues 396–443 (LRFGDRMFYKDWWNSTSYSNYYRTWNVVVHDWLYYYAYKDFLWFFSKR). The FYXDWWN motif motif lies at 403–409 (FYKDWWN). The an acyl-CoA site is built by N415, R418, N421, H425, Y433, K445, and S456. A helical membrane pass occupies residues 444–468 (FKSAAMLAVFAVSAVVHEYALAVCL). H460 is an active-site residue. Residues 469–474 (SFFYPV) are Lumenal-facing. Residues 475 to 490 (LFVLFMFFGMAFNFIV) form a helical membrane-spanning segment. The Cytoplasmic segment spans residues 491–496 (NDSRKK). Residues 497–528 (PIWNVMMWTSLFLGNGVLLCFYSQEWYARQHC) form a helical membrane-spanning segment. An intrachain disulfide couples C528 to C546. The Lumenal segment spans residues 529-550 (PLKNPTFLDYVRPRSWTCRYVF).

This sequence belongs to the membrane-bound acyltransferase family. Sterol o-acyltransferase subfamily. In terms of assembly, may form homo- or heterodimers. Interacts with UBIAD1. As to expression, expressed in most tissues, but most strongly in the adrenal gland. Expressed more strongly in liver Kupffer cells than in hepatocytes.

The protein resides in the endoplasmic reticulum membrane. The catalysed reaction is a sterol + a long-chain fatty acyl-CoA = a long-chain 3-hydroxysterol ester + CoA. The enzyme catalyses cholesterol + an acyl-CoA = a cholesterol ester + CoA. It carries out the reaction cholesterol + (9Z)-octadecenoyl-CoA = cholesteryl (9Z-octadecenoate) + CoA. It catalyses the reaction cholesterol + hexadecanoyl-CoA = cholesteryl hexadecanoate + CoA. The catalysed reaction is octadecanoyl-CoA + cholesterol = cholesteryl octadecanoate + CoA. The enzyme catalyses (9Z,12Z)-octadecadienoyl-CoA + cholesterol = cholesteryl (9Z,12Z)-octadecadienoate + CoA. It carries out the reaction (5Z,8Z,11Z,14Z)-eicosatetraenoyl-CoA + cholesterol = cholesteryl (5Z,8Z,11Z,14Z)-eicosatetraenoate + CoA. It catalyses the reaction (9Z)-hexadecenoyl-CoA + cholesterol = cholesteryl (9Z)-hexadecenoate + CoA. The catalysed reaction is (11Z)-octadecenoyl-CoA + cholesterol = cholesteryl (11Z)-octadecenoate + CoA. The enzyme catalyses (7Z)-octadecenoyl-CoA + cholesterol = cholesteryl (7Z)-octadecenoate + CoA. Functionally, catalyzes the formation of fatty acid-cholesterol esters, which are less soluble in membranes than cholesterol. Plays a role in lipoprotein assembly and dietary cholesterol absorption. Preferentially utilizes oleoyl-CoA ((9Z)-octadecenoyl-CoA) as a substrate: shows a higher activity towards an acyl-CoA substrate with a double bond at the delta-9 position (9Z) than towards saturated acyl-CoA or an unsaturated acyl-CoA with a double bond at the delta-7 (7Z) or delta-11 (11Z) positions. This chain is Sterol O-acyltransferase 1 (SOAT1), found in Chlorocebus aethiops (Green monkey).